The sequence spans 176 residues: RNA pyrophosphohydrolase (176 aa).

The Nudix hydrolase domain occupies 8–159 (PYRTCVGMML…KRPVYERVVK (152 aa)). Residues 47–68 (GGVDPGEDTWAAAKRELYEETS) carry the Nudix box motif.

Belongs to the Nudix hydrolase family. RppH subfamily. It depends on a divalent metal cation as a cofactor.

Accelerates the degradation of transcripts by removing pyrophosphate from the 5'-end of triphosphorylated RNA, leading to a more labile monophosphorylated state that can stimulate subsequent ribonuclease cleavage. This Rhodopseudomonas palustris (strain BisA53) protein is RNA pyrophosphohydrolase.